Here is a 150-residue protein sequence, read N- to C-terminus: 3-dehydroquinate dehydratase (150 aa).

Catalysis depends on Tyr26, which acts as the Proton acceptor. 3 residues coordinate substrate: Asn77, His83, and Asp90. Residue His103 is the Proton donor of the active site. Substrate is bound by residues 104 to 105 (LS) and Arg114.

The protein belongs to the type-II 3-dehydroquinase family. As to quaternary structure, homododecamer.

The catalysed reaction is 3-dehydroquinate = 3-dehydroshikimate + H2O. It functions in the pathway metabolic intermediate biosynthesis; chorismate biosynthesis; chorismate from D-erythrose 4-phosphate and phosphoenolpyruvate: step 3/7. Catalyzes a trans-dehydration via an enolate intermediate. The protein is 3-dehydroquinate dehydratase of Photobacterium profundum (strain SS9).